The chain runs to 207 residues: Large ribosomal subunit protein uL4 (207 aa).

Positions 49 to 75 are disordered; it reads HAVKNRSAVSGGGRKPWKQKGTGRARA.

Belongs to the universal ribosomal protein uL4 family. In terms of assembly, part of the 50S ribosomal subunit.

One of the primary rRNA binding proteins, this protein initially binds near the 5'-end of the 23S rRNA. It is important during the early stages of 50S assembly. It makes multiple contacts with different domains of the 23S rRNA in the assembled 50S subunit and ribosome. Its function is as follows. Forms part of the polypeptide exit tunnel. This chain is Large ribosomal subunit protein uL4, found in Leuconostoc mesenteroides subsp. mesenteroides (strain ATCC 8293 / DSM 20343 / BCRC 11652 / CCM 1803 / JCM 6124 / NCDO 523 / NBRC 100496 / NCIMB 8023 / NCTC 12954 / NRRL B-1118 / 37Y).